A 450-amino-acid chain; its full sequence is tRNA modification GTPase MnmE (450 aa).

3 residues coordinate (6S)-5-formyl-5,6,7,8-tetrahydrofolate: arginine 23, glutamate 80, and arginine 123. A TrmE-type G domain is found at 219–372 (GLHVVLAGQP…LRARLLQMAG (154 aa)). Asparagine 229 contributes to the K(+) binding site. Residues 229 to 234 (NVGKSS), 248 to 254 (TPIAGTT), and 273 to 276 (DTAG) contribute to the GTP site. Serine 233 serves as a coordination point for Mg(2+). The K(+) site is built by threonine 248, isoleucine 250, and threonine 253. Mg(2+) is bound at residue threonine 254. Lysine 450 contributes to the (6S)-5-formyl-5,6,7,8-tetrahydrofolate binding site.

This sequence belongs to the TRAFAC class TrmE-Era-EngA-EngB-Septin-like GTPase superfamily. TrmE GTPase family. As to quaternary structure, homodimer. Heterotetramer of two MnmE and two MnmG subunits. The cofactor is K(+).

It is found in the cytoplasm. Functionally, exhibits a very high intrinsic GTPase hydrolysis rate. Involved in the addition of a carboxymethylaminomethyl (cmnm) group at the wobble position (U34) of certain tRNAs, forming tRNA-cmnm(5)s(2)U34. This Bordetella avium (strain 197N) protein is tRNA modification GTPase MnmE.